An 89-amino-acid chain; its full sequence is MLCAIYKSKKKDGMYLYIEKRDDFSVLPDSLREAFGIPVFVMLFNLVGKKTLINTDNREVMEQIKQNGFYLQMPKKDDWLFTIEKSCDL.

Positions 1–85 (MLCAIYKSKK…KDDWLFTIEK (85 aa)) constitute a YcgL domain.

The chain is YcgL domain-containing protein Asuc_1390 from Actinobacillus succinogenes (strain ATCC 55618 / DSM 22257 / CCUG 43843 / 130Z).